A 242-amino-acid chain; its full sequence is Small ribosomal subunit protein uS2 (242 aa).

The protein belongs to the universal ribosomal protein uS2 family.

This is Small ribosomal subunit protein uS2 from Shewanella denitrificans (strain OS217 / ATCC BAA-1090 / DSM 15013).